The sequence spans 256 residues: DNA repair protein RecO (256 aa).

It belongs to the RecO family.

Functionally, involved in DNA repair and RecF pathway recombination. The polypeptide is DNA repair protein RecO (Shouchella clausii (strain KSM-K16) (Alkalihalobacillus clausii)).